A 130-amino-acid polypeptide reads, in one-letter code: Histone H2A type 1-C (130 aa).

The segment at M1–A22 is disordered. At S2 the chain carries N-acetylserine. Position 2 is a phosphoserine; by RPS6KA5 (S2). R4 bears the Citrulline; alternate mark. R4 is modified (symmetric dimethylarginine; by PRMT5; alternate). N6-(2-hydroxyisobutyryl)lysine; alternate occurs at positions 6 and 10. N6-acetyllysine; alternate is present on K6. A compositionally biased stretch (basic residues) spans Q7–S19. Residues K10 and K14 each carry the N6-(beta-hydroxybutyryl)lysine; alternate modification. Residue K10 is modified to N6-lactoyllysine; alternate. Residue K10 is modified to N6-succinyllysine; alternate. Residue K14 forms a Glycyl lysine isopeptide (Lys-Gly) (interchain with G-Cter in ubiquitin); alternate linkage. Residue K16 forms a Glycyl lysine isopeptide (Lys-Gly) (interchain with G-Cter in ubiquitin) linkage. N6-(2-hydroxyisobutyryl)lysine; alternate is present on K37. At K37 the chain carries N6-(beta-hydroxybutyryl)lysine; alternate. K37 is modified (N6-crotonyllysine; alternate). N6-(2-hydroxyisobutyryl)lysine is present on residues K75 and K76. Residue K96 is modified to N6-(2-hydroxyisobutyryl)lysine; alternate. K96 bears the N6-(beta-hydroxybutyryl)lysine; alternate mark. An N6-succinyllysine; alternate modification is found at K96. N6-glutaryllysine; alternate is present on K96. An N5-methylglutamine modification is found at Q105. N6-(2-hydroxyisobutyryl)lysine; alternate is present on K119. K119 carries the post-translational modification N6-(beta-hydroxybutyryl)lysine; alternate. 2 positions are modified to N6-crotonyllysine; alternate: K119 and K120. Residues K119 and K120 each carry the N6-glutaryllysine; alternate modification. K120 is covalently cross-linked (Glycyl lysine isopeptide (Lys-Gly) (interchain with G-Cter in ubiquitin); alternate). Position 121 is a phosphothreonine; by DCAF1 (T121). K126 bears the N6-crotonyllysine; alternate mark. Position 126 is an N6-glutaryllysine; alternate (K126).

This sequence belongs to the histone H2A family. The nucleosome is a histone octamer containing two molecules each of H2A, H2B, H3 and H4 assembled in one H3-H4 heterotetramer and two H2A-H2B heterodimers. The octamer wraps approximately 147 bp of DNA. Deiminated on Arg-4 in granulocytes upon calcium entry. In terms of processing, monoubiquitination of Lys-120 (H2AK119Ub) by RING1, TRIM37 and RNF2/RING2 complex gives a specific tag for epigenetic transcriptional repression and participates in X chromosome inactivation of female mammals. It is involved in the initiation of both imprinted and random X inactivation. Ubiquitinated H2A is enriched in inactive X chromosome chromatin. Ubiquitination of H2A functions downstream of methylation of 'Lys-27' of histone H3 (H3K27me). H2AK119Ub by RNF2/RING2 can also be induced by ultraviolet and may be involved in DNA repair. Monoubiquitination of Lys-120 (H2AK119Ub) by TRIM37 may promote transformation of cells in a number of breast cancers. Following DNA double-strand breaks (DSBs), it is ubiquitinated through 'Lys-63' linkage of ubiquitin moieties by the E2 ligase UBE2N and the E3 ligases RNF8 and RNF168, leading to the recruitment of repair proteins to sites of DNA damage. Ubiquitination at Lys-14 and Lys-16 (H2AK13Ub and H2AK15Ub, respectively) in response to DNA damage is initiated by RNF168 that mediates monoubiquitination at these 2 sites, and 'Lys-63'-linked ubiquitin are then conjugated to monoubiquitin; RNF8 is able to extend 'Lys-63'-linked ubiquitin chains in vitro. Deubiquitinated by USP51 at Lys-14 and Lys-16 (H2AK13Ub and H2AK15Ub, respectively) after damaged DNA is repaired. H2AK119Ub and ionizing radiation-induced 'Lys-63'-linked ubiquitination (H2AK13Ub and H2AK15Ub) are distinct events. Post-translationally, phosphorylation on Ser-2 (H2AS1ph) is enhanced during mitosis. Phosphorylation on Ser-2 by RPS6KA5/MSK1 directly represses transcription. Acetylation of H3 inhibits Ser-2 phosphorylation by RPS6KA5/MSK1. Phosphorylation at Thr-121 (H2AT120ph) by DCAF1 is present in the regulatory region of many tumor suppresor genes and down-regulates their transcription. Glutamine methylation at Gln-105 (H2AQ104me) by FBL is specifically dedicated to polymerase I. It is present at 35S ribosomal DNA locus and impairs binding of the FACT complex. In terms of processing, symmetric dimethylation on Arg-4 by the PRDM1/PRMT5 complex may play a crucial role in the germ-cell lineage. Post-translationally, crotonylation (Kcr) is specifically present in male germ cells and marks testis-specific genes in post-meiotic cells, including X-linked genes that escape sex chromosome inactivation in haploid cells. Crotonylation marks active promoters and enhancers and confers resistance to transcriptional repressors. It is also associated with post-meiotically activated genes on autosomes. Lactylated in macrophages by EP300/P300 by using lactoyl-CoA directly derived from endogenous or exogenous lactate, leading to stimulates gene transcription.

It localises to the nucleus. It is found in the chromosome. Its function is as follows. Core component of nucleosome. Nucleosomes wrap and compact DNA into chromatin, limiting DNA accessibility to the cellular machineries which require DNA as a template. Histones thereby play a central role in transcription regulation, DNA repair, DNA replication and chromosomal stability. DNA accessibility is regulated via a complex set of post-translational modifications of histones, also called histone code, and nucleosome remodeling. This is Histone H2A type 1-C from Homo sapiens (Human).